The chain runs to 353 residues: tRNA-specific 2-thiouridylase MnmA 2 (353 aa).

Residues 9-16 (AMSGGVDS) and Met-35 contribute to the ATP site. The active-site Nucleophile is the Cys-98. An intrachain disulfide couples Cys-98 to Cys-194. Residue Gly-122 coordinates ATP. Positions 144 to 146 (KDQ) are interaction with tRNA. Cys-194 acts as the Cysteine persulfide intermediate in catalysis. The tract at residues 300–301 (RY) is interaction with tRNA.

Belongs to the MnmA/TRMU family.

Its subcellular location is the cytoplasm. It carries out the reaction S-sulfanyl-L-cysteinyl-[protein] + uridine(34) in tRNA + AH2 + ATP = 2-thiouridine(34) in tRNA + L-cysteinyl-[protein] + A + AMP + diphosphate + H(+). In terms of biological role, catalyzes the 2-thiolation of uridine at the wobble position (U34) of tRNA, leading to the formation of s(2)U34. The protein is tRNA-specific 2-thiouridylase MnmA 2 of Clostridium botulinum (strain Langeland / NCTC 10281 / Type F).